A 182-amino-acid polypeptide reads, in one-letter code: ATP synthase subunit b 1 (182 aa).

The helical transmembrane segment at 24–44 threads the bilayer; the sequence is FADPAFWVSIAFLMVVGFVYI.

Belongs to the ATPase B chain family. In terms of assembly, F-type ATPases have 2 components, F(1) - the catalytic core - and F(0) - the membrane proton channel. F(1) has five subunits: alpha(3), beta(3), gamma(1), delta(1), epsilon(1). F(0) has three main subunits: a(1), b(2) and c(10-14). The alpha and beta chains form an alternating ring which encloses part of the gamma chain. F(1) is attached to F(0) by a central stalk formed by the gamma and epsilon chains, while a peripheral stalk is formed by the delta and b chains.

The protein resides in the cell inner membrane. In terms of biological role, f(1)F(0) ATP synthase produces ATP from ADP in the presence of a proton or sodium gradient. F-type ATPases consist of two structural domains, F(1) containing the extramembraneous catalytic core and F(0) containing the membrane proton channel, linked together by a central stalk and a peripheral stalk. During catalysis, ATP synthesis in the catalytic domain of F(1) is coupled via a rotary mechanism of the central stalk subunits to proton translocation. Component of the F(0) channel, it forms part of the peripheral stalk, linking F(1) to F(0). The protein is ATP synthase subunit b 1 of Rhodospirillum rubrum (strain ATCC 11170 / ATH 1.1.1 / DSM 467 / LMG 4362 / NCIMB 8255 / S1).